The following is an 89-amino-acid chain: Small ribosomal subunit protein uS15 (89 aa).

Belongs to the universal ribosomal protein uS15 family. In terms of assembly, part of the 30S ribosomal subunit. Forms a bridge to the 50S subunit in the 70S ribosome, contacting the 23S rRNA.

In terms of biological role, one of the primary rRNA binding proteins, it binds directly to 16S rRNA where it helps nucleate assembly of the platform of the 30S subunit by binding and bridging several RNA helices of the 16S rRNA. Functionally, forms an intersubunit bridge (bridge B4) with the 23S rRNA of the 50S subunit in the ribosome. The protein is Small ribosomal subunit protein uS15 of Streptococcus pneumoniae (strain P1031).